The chain runs to 448 residues: Probable intron-encoded endonuclease bI1 (448 aa).

Residues 1–132 (MRLLKSHPLL…LMMATAFLGY (132 aa)) form a cob exon 1 encoded region. The next 3 membrane-spanning stretches (helical) occupy residues 32–52 (FGSL…TLAM), 86–106 (ASAF…YGSY), and 112–132 (LVWA…FLGY). Residues 133–448 (QHSPKWFDIS…QWIVEDFSDK (316 aa)) are cob intron 1 encoded. Residues 230–321 (DLSGVYMIIN…LKLLVPNYNI (92 aa)) form the GIY-YIG domain.

It to endonucleases of group I introns of fungi and phage. Post-translationally, the mature protein may arise from proteolytic cleavage of an in-frame translation of cob exon 1 plus intron 1, containing the bI1 open reading frame.

It is found in the mitochondrion inner membrane. Functionally, mitochondrial DNA endonuclease involved in intron homing. The sequence is that of Probable intron-encoded endonuclease bI1 (bI1) from Neurospora crassa (strain ATCC 24698 / 74-OR23-1A / CBS 708.71 / DSM 1257 / FGSC 987).